A 209-amino-acid polypeptide reads, in one-letter code: High frequency lysogenization protein HflD homolog (209 aa).

This sequence belongs to the HflD family.

Its subcellular location is the cytoplasm. The protein resides in the cell inner membrane. In Sodalis glossinidius (strain morsitans), this protein is High frequency lysogenization protein HflD homolog.